The primary structure comprises 100 residues: Urease subunit gamma (100 aa).

Belongs to the urease gamma subunit family. Heterotrimer of UreA (gamma), UreB (beta) and UreC (alpha) subunits. Three heterotrimers associate to form the active enzyme.

Its subcellular location is the cytoplasm. The enzyme catalyses urea + 2 H2O + H(+) = hydrogencarbonate + 2 NH4(+). It participates in nitrogen metabolism; urea degradation; CO(2) and NH(3) from urea (urease route): step 1/1. In Opitutus terrae (strain DSM 11246 / JCM 15787 / PB90-1), this protein is Urease subunit gamma.